Here is a 1383-residue protein sequence, read N- to C-terminus: Insulin receptor (1383 aa).

A signal peptide spans 1-26 (MGSGRGCETTAVPLLMAVAVAGGTAG). Extracellular segments follow at residues 27 to 759 (HLYP…TRPS) and 764 to 957 (SLEE…NIAK). Cys34 and Cys52 form a disulfide bridge. 4 N-linked (GlcNAc...) asparagine glycosylation sites follow: Asn42, Asn51, Asn104, and Asn137. Cystine bridges form between Cys152-Cys181, Cys185-Cys208, Cys195-Cys214, Cys218-Cys227, Cys222-Cys233, Cys234-Cys242, Cys238-Cys251, Cys254-Cys263, and Cys267-Cys279. Asn241 carries N-linked (GlcNAc...) asparagine glycosylation. Asn281 carries N-linked (GlcNAc...) asparagine glycosylation. Disulfide bonds link Cys285/Cys310, Cys292/Cys300, Cys314/Cys327, Cys330/Cys334, and Cys338/Cys359. N-linked (GlcNAc...) asparagine glycosylation occurs at Asn321. The N-linked (GlcNAc...) asparagine glycan is linked to Asn363. Ser399 is modified (phosphoserine). Tyr400 is modified (phosphotyrosine). Ser406 is modified (phosphoserine). N-linked (GlcNAc...) asparagine glycosylation is found at Asn423 and Asn444. Cys461 and Cys494 form a disulfide bridge. 4 N-linked (GlcNAc...) asparagine glycosylation sites follow: Asn540, Asn634, Asn652, and Asn699. The region spanning 625–727 (VPLDPISVSN…SQILKELEES (103 aa)) is the Fibronectin type-III 1 domain. Cys675 and Cys900 are oxidised to a cystine. The tract at residues 687 to 709 (SPPFESDDSQKHNQSEYDDSASE) is disordered. The segment at 734–742 (EDYLHNVVF) is insulin-binding. Positions 747 to 783 (TSSGNGAEDTRPSRKRRSLEEVGNVTATTPTLPDFPN) are disordered. Fibronectin type-III domains lie at 754–848 (EDTR…TMPE) and 854–948 (IVGP…VTDY). N-linked (GlcNAc...) asparagine glycosylation is found at Asn770, Asn783, Asn921, and Asn934. A compositionally biased stretch (polar residues) spans 771 to 783 (VTATTPTLPDFPN). A helical transmembrane segment spans residues 958–978 (IIIGPLIFVFLFSVVIGSIYL). Residues 979-1383 (FLRKRQPDGP…VLTLPRSNPS (405 aa)) are Cytoplasmic-facing. Residues 997-1000 (NPEY) form an important for interaction with IRS1, SHC1 and STAT5B region. Tyr1000 is modified (phosphotyrosine; by autocatalysis). Positions 1024–1299 (ITLLRELGQG…LLKDDLHPSF (276 aa)) constitute a Protein kinase domain. Residues Ser1034 and Lys1058 each coordinate ATP. A Glycyl lysine isopeptide (Lys-Gly) (interchain with G-Cter in ubiquitin) cross-link involves residue Lys1080. Cys1084 carries the post-translational modification S-nitrosocysteine. Residue 1105-1111 (ELMAHGD) participates in ATP binding. Residue Asp1160 is the Proton donor/acceptor of the active site. ATP is bound by residues 1164-1165 (RN) and Asp1178. A phosphotyrosine; by autocatalysis mark is found at Tyr1186, Tyr1190, Tyr1191, Tyr1356, and Tyr1362. The disordered stretch occupies residues 1361–1383 (PYTHMNGGKKNGRVLTLPRSNPS). Positions 1362–1365 (YTHM) are PIK3R1 binding.

Belongs to the protein kinase superfamily. Tyr protein kinase family. Insulin receptor subfamily. As to quaternary structure, tetramer of 2 alpha and 2 beta chains linked by disulfide bonds. The alpha chains carry the insulin-binding regions, while the beta chains carry the kinase domain. Forms a hybrid receptor with IGF1R, the hybrid is a tetramer consisting of 1 alpha chain and 1 beta chain of INSR and 1 alpha chain and 1 beta chain of IGF1R. Interacts with SORBS1 but dissociates from it following insulin stimulation. Binds SH2B2. Activated form of INSR interacts (via Tyr-1000) with the PTB/PID domains of IRS1 and SHC1. The sequences surrounding the phosphorylated NPXY motif contribute differentially to either IRS1 or SHC1 recognition. Interacts (via tyrosines in the C-terminus) with IRS2 (via PTB domain and 591-786 AA); the 591-786 would be the primary anchor of IRS2 to INSR while the PTB domain would have a stabilizing action on the interaction with INSR. Interacts with the SH2 domains of the 85 kDa regulatory subunit of PI3K (PIK3R1) in vitro, when autophosphorylated on tyrosine residues. Interacts with SOCS7. Interacts (via the phosphorylated Tyr-1000), with SOCS3. Interacts (via the phosphorylated Tyr-1186, Tyr-1190, Tyr-1191) with SOCS1. Interacts with ARRB2. Interacts with GRB10; this interaction blocks the association between IRS1/IRS2 and INSR, significantly reduces insulin-stimulated tyrosine phosphorylation of IRS1 and IRS2 and thus decreases insulin signaling. Interacts with PDPK1. Interacts (via Tyr-1191) with GRB14 (via BPS domain); this interaction protects the tyrosines in the activation loop from dephosphorylation, but promotes dephosphorylation of Tyr-1000, this results in decreased interaction with, and phosphorylation of, IRS1. Interacts (via subunit alpha) with ENPP1 (via 485-599 AA); this interaction blocks autophosphorylation. Interacts with PTPRE; this interaction is dependent of Tyr-1186, Tyr-1190 and Tyr-1191 of the INSR. Interacts with STAT5B (via SH2 domain). Interacts with PTPRF. Interacts with GRB7. Interacts with CAV2 (tyrosine-phosphorylated form); the interaction is increased with 'Tyr-27'phosphorylation of CAV2. Interacts with ATIC; ATIC together with PRKAA2/AMPK2 and HACD3/PTPLAD1 is proposed to be part of a signaling netwok regulating INSR autophosphorylation and endocytosis. Interacts with the insulin receptor SORL1; this interaction strongly increases its surface exposure, hence strengthens insulin signal reception. Interacts (tyrosine phosphorylated) with CCDC88A/GIV (via SH2-like region); binding requires autophosphorylation of the Insr C-terminal region. Interacts with GNAI3; the interaction is probably mediated by CCDC88A/GIV. Interacts with LMBRD1. Interacts (in response to insulin stimulation) with NCK1; this interaction may recruit PTPN1 to mediate INSR dephosphorylation. Interacts with CD248; this interaction diminishes INSR autophosphorylation. After being transported from the endoplasmic reticulum to the Golgi apparatus, the single glycosylated precursor is further glycosylated and then cleaved, followed by its transport to the plasma membrane. Post-translationally, autophosphorylated on tyrosine residues in response to insulin. Phosphorylation of Tyr-1000 is required for binding to IRS1, SHC1 and STAT5B. May also be phosphorylated at Tyr-1186 and Tyr-1191 by mTORC2. Dephosphorylated by PTPRE at Tyr-1000, Tyr-1186, Tyr-1190 and Tyr-1191. Dephosphorylated by PTPRF and PTPN1. Dephosphorylated by PTPN2; down-regulates insulin-induced signaling. In terms of processing, S-nitrosylation at Cys-1084 by BLVRB inhibits the receptor tyrosine kinase, thereby inhibiting insulin signaling. Ubiquitinated by MARCHF1; leading to degradation thereby reducing surface INSR expression.

It localises to the cell membrane. Its subcellular location is the late endosome. It is found in the lysosome. It carries out the reaction L-tyrosyl-[protein] + ATP = O-phospho-L-tyrosyl-[protein] + ADP + H(+). Its activity is regulated as follows. Activated in response to insulin. Autophosphorylation activates the kinase activity. PTPN1, PTPRE and PTPRF dephosphorylate important tyrosine residues, thereby reducing INSR activity. Inhibited by ENPP1. GRB10 and GRB14 inhibit the catalytic activity of the INSR, they block access of substrates to the activated receptor. SOCS1 and SOCS3 act as negative regulators of INSR activity, they bind to the activated INRS and interfere with the phosphorylation of INSR substrates. Its function is as follows. Receptor tyrosine kinase which mediates the pleiotropic actions of insulin. Binding of insulin leads to phosphorylation of several intracellular substrates, including, insulin receptor substrates (IRS1, 2, 3, 4), SHC, GAB1, CBL and other signaling intermediates. Each of these phosphorylated proteins serve as docking proteins for other signaling proteins that contain Src-homology-2 domains (SH2 domain) that specifically recognize different phosphotyrosine residues, including the p85 regulatory subunit of PI3K and SHP2. Phosphorylation of IRSs proteins lead to the activation of two main signaling pathways: the PI3K-AKT/PKB pathway, which is responsible for most of the metabolic actions of insulin, and the Ras-MAPK pathway, which regulates expression of some genes and cooperates with the PI3K pathway to control cell growth and differentiation. Binding of the SH2 domains of PI3K to phosphotyrosines on IRS1 leads to the activation of PI3K and the generation of phosphatidylinositol-(3, 4, 5)-triphosphate (PIP3), a lipid second messenger, which activates several PIP3-dependent serine/threonine kinases, such as PDPK1 and subsequently AKT/PKB. The net effect of this pathway is to produce a translocation of the glucose transporter SLC2A4/GLUT4 from cytoplasmic vesicles to the cell membrane to facilitate glucose transport. Moreover, upon insulin stimulation, activated AKT/PKB is responsible for: anti-apoptotic effect of insulin by inducing phosphorylation of BAD; regulates the expression of gluconeogenic and lipogenic enzymes by controlling the activity of the winged helix or forkhead (FOX) class of transcription factors. Another pathway regulated by PI3K-AKT/PKB activation is mTORC1 signaling pathway which regulates cell growth and metabolism and integrates signals from insulin. AKT mediates insulin-stimulated protein synthesis by phosphorylating TSC2 thereby activating mTORC1 pathway. The Ras/RAF/MAP2K/MAPK pathway is mainly involved in mediating cell growth, survival and cellular differentiation of insulin. Phosphorylated IRS1 recruits GRB2/SOS complex, which triggers the activation of the Ras/RAF/MAP2K/MAPK pathway. In addition to binding insulin, the insulin receptor can bind insulin-like growth factors (IGFI and IGFII). When present in a hybrid receptor with IGF1R, binds IGF1. In adipocytes, inhibits lipolysis. The chain is Insulin receptor (Insr) from Rattus norvegicus (Rat).